Consider the following 677-residue polypeptide: Sulfate transporter 2.1 (677 aa).

Over 1–118 (MKERDSESFE…NYKLTMFKND (118 aa)) the chain is Cytoplasmic. Residues 23–54 (STHMIQMAMANSGSSAAAQAGQDQPDRSKWLL) form a disordered region. Low complexity predominate over residues 28 to 44 (QMAMANSGSSAAAQAGQ). Residues 119–139 (LMAGLTLASLCIPQSIGYATL) form a helical membrane-spanning segment. Residues 140–141 (AK) lie on the Extracellular side of the membrane. Residues 142–162 (LDPQYGLYTSVVPPLIYALMG) form a helical membrane-spanning segment. The Cytoplasmic portion of the chain corresponds to 163–166 (TSRE). A helical transmembrane segment spans residues 167–187 (IAIGPVAVVSLLISSMLQKLI). The Extracellular portion of the chain corresponds to 188-198 (DPETDPLGYKK). The helical transmembrane segment at 199–219 (LVLTTTFFAGIFQASFGLFRL) threads the bilayer. The Cytoplasmic segment spans residues 220–221 (GF). A helical membrane pass occupies residues 222-242 (LVDFLSHAAIVGFMGGAAIVI). Over 243 to 278 (GLQQLKGLLGITNFTTNTDIVSVLRAVWRSCQQQWS) the chain is Extracellular. N-linked (GlcNAc...) asparagine glycosylation is present at asparagine 255. Residues 279 to 299 (PHTFILGCSFLSFILITRFIG) traverse the membrane as a helical segment. The Cytoplasmic portion of the chain corresponds to 300 to 304 (KKYKK). A helical membrane pass occupies residues 305 to 325 (LFWLPAIAPLIAVVVSTLMVF). The Extracellular portion of the chain corresponds to 326-360 (LTKADEHGVKTVRHIKGGLNPMSIQDLDFNTPHLG). A helical transmembrane segment spans residues 361 to 381 (QIAKIGLIIAIVALTEAIAVG). The Cytoplasmic portion of the chain corresponds to 382 to 397 (RSFAGIKGYRLDGNKE). The chain crosses the membrane as a helical span at residues 398-418 (MVAIGFMNVLGSFTSCYAATG). At 419–426 (SFSRTAVN) the chain is on the extracellular side. Residues 427 to 447 (FAAGCETAMSNIVMAVTVFVA) traverse the membrane as a helical segment. Residues 448–454 (LECLTRL) lie on the Cytoplasmic side of the membrane. The chain crosses the membrane as a helical span at residues 455–475 (LYYTPIAILASIILSALPGLI). The Extracellular portion of the chain corresponds to 476–490 (NINEAIHIWKVDKFD). The helical transmembrane segment at 491–511 (FLALIGAFFGVLFASVEIGLL) threads the bilayer. Residues 512–677 (VAVVISFAKI…ALDACFGLKV (166 aa)) lie on the Cytoplasmic side of the membrane. Residues 548–672 (YPMTVKTPGV…LTIGEALDAC (125 aa)) enclose the STAS domain.

It belongs to the SLC26A/SulP transporter (TC 2.A.53) family. As to expression, expressed in root cap, central cylinder of roots and in vascular tissues of leaves.

The protein localises to the membrane. Low-affinity H(+)/sulfate cotransporter that may be involved in root-to-shoot translocation of sulfate. Plays a central role in the regulation of sulfate assimilation. This chain is Sulfate transporter 2.1 (SULTR2;1), found in Arabidopsis thaliana (Mouse-ear cress).